A 160-amino-acid chain; its full sequence is RNA pyrophosphohydrolase (160 aa).

The 145-residue stretch at Pro10–Asp154 folds into the Nudix hydrolase domain. Residues Gly44–Gly65 carry the Nudix box motif.

It belongs to the Nudix hydrolase family. RppH subfamily. A divalent metal cation serves as cofactor.

Functionally, accelerates the degradation of transcripts by removing pyrophosphate from the 5'-end of triphosphorylated RNA, leading to a more labile monophosphorylated state that can stimulate subsequent ribonuclease cleavage. The sequence is that of RNA pyrophosphohydrolase from Dinoroseobacter shibae (strain DSM 16493 / NCIMB 14021 / DFL 12).